The sequence spans 599 residues: Translation initiation factor IF-2 (599 aa).

Residues proline 111–glutamate 278 form the tr-type G domain. The tract at residues glycine 120 to threonine 127 is G1. Glycine 120–threonine 127 is a binding site for GTP. Positions glycine 145–histidine 149 are G2. A G3 region spans residues aspartate 166 to glycine 169. Residues aspartate 166–histidine 170 and asparagine 220–aspartate 223 contribute to the GTP site. Residues asparagine 220 to aspartate 223 form a G4 region. Positions serine 256–leucine 258 are G5.

Belongs to the TRAFAC class translation factor GTPase superfamily. Classic translation factor GTPase family. IF-2 subfamily.

It is found in the cytoplasm. One of the essential components for the initiation of protein synthesis. Protects formylmethionyl-tRNA from spontaneous hydrolysis and promotes its binding to the 30S ribosomal subunits. Also involved in the hydrolysis of GTP during the formation of the 70S ribosomal complex. The chain is Translation initiation factor IF-2 from Mesomycoplasma hyopneumoniae (strain 7448) (Mycoplasma hyopneumoniae).